We begin with the raw amino-acid sequence, 335 residues long: Endo-beta-N-acetylglucosaminidase F2 (335 aa).

An N-terminal signal peptide occupies residues 1 to 45 (MKTANFSFALCLSVVIMLFIKCTRSEQDLSVTKDAIAQKSGVTVS). Residues 61 to 321 (QISAGYYRTW…SSNDNTLRAP (261 aa)) enclose the GH18 domain. O-linked (Man...) serine glycosylation is found at Ser-73, Ser-89, and Ser-143. Glu-171 (proton donor) is an active-site residue.

This sequence belongs to the glycosyl hydrolase 18 family. Monomer. Post-translationally, carbohydrates at Ser-73, Ser-89 and Ser-143 consist of (2-OMe)Man1-4GlcNAcU1-4GlcU1-4Glc1-4(2-OMe)GlcU1-4[(2-OMe)Rham1-2]Man.

It is found in the secreted. The catalysed reaction is an N(4)-(oligosaccharide-(1-&gt;3)-[oligosaccharide-(1-&gt;6)]-beta-D-Man-(1-&gt;4)-beta-D-GlcNAc-(1-&gt;4)-alpha-D-GlcNAc)-L-asparaginyl-[protein] + H2O = an oligosaccharide-(1-&gt;3)-[oligosaccharide-(1-&gt;6)]-beta-D-Man-(1-&gt;4)-D-GlcNAc + N(4)-(N-acetyl-beta-D-glucosaminyl)-L-asparaginyl-[protein]. In terms of biological role, endohydrolysis of the di-N-acetylchitobiosyl unit in high-mannose glycopeptides and glycoproteins. Complex biantennary glycans are the preferred substrates. Tri- and tetraantennary glycans are not hydrolyzed, and high mannose glycans are very poor substrates. The chain is Endo-beta-N-acetylglucosaminidase F2 (endOF2) from Elizabethkingia meningoseptica (Chryseobacterium meningosepticum).